A 718-amino-acid polypeptide reads, in one-letter code: Catalase-peroxidase 1 (718 aa).

Positions Trp93–Tyr221 form a cross-link, tryptophyl-tyrosyl-methioninium (Trp-Tyr) (with M-247). The Proton acceptor role is filled by His94. A cross-link (tryptophyl-tyrosyl-methioninium (Tyr-Met) (with W-93)) is located at residues Tyr221–Met247. His262 is a heme b binding site.

This sequence belongs to the peroxidase family. Peroxidase/catalase subfamily. Homodimer or homotetramer. The cofactor is heme b. Formation of the three residue Trp-Tyr-Met cross-link is important for the catalase, but not the peroxidase activity of the enzyme.

It carries out the reaction H2O2 + AH2 = A + 2 H2O. The enzyme catalyses 2 H2O2 = O2 + 2 H2O. In terms of biological role, bifunctional enzyme with both catalase and broad-spectrum peroxidase activity. The polypeptide is Catalase-peroxidase 1 (Shewanella amazonensis (strain ATCC BAA-1098 / SB2B)).